Here is a 458-residue protein sequence, read N- to C-terminus: Alpha-glucosides-binding periplasmic protein AglE (458 aa).

An N-terminal signal peptide occupies residues 1–27 (MKRSLLIGVAAFALLAGTAGLAGTAGA).

It belongs to the bacterial solute-binding protein 1 family.

It is found in the periplasm. Part of the binding-protein-dependent transport system for alpha-glucosides such as sucrose, maltose and trehalose. The sequence is that of Alpha-glucosides-binding periplasmic protein AglE (aglE) from Rhizobium meliloti (strain 1021) (Ensifer meliloti).